The primary structure comprises 866 residues: Leucine--tRNA ligase (866 aa).

The 'HIGH' region motif lies at Pro-42–His-52. Residues Lys-630–Ser-634 carry the 'KMSKS' region motif. Lys-633 lines the ATP pocket.

It belongs to the class-I aminoacyl-tRNA synthetase family.

It localises to the cytoplasm. It catalyses the reaction tRNA(Leu) + L-leucine + ATP = L-leucyl-tRNA(Leu) + AMP + diphosphate. This is Leucine--tRNA ligase from Laribacter hongkongensis (strain HLHK9).